A 270-amino-acid polypeptide reads, in one-letter code: uncharacterized protein (270 aa).

A signal peptide spans 1-22; that stretch reads MEYIKKIALYMSVLLLIIFIGG. Cys23 is lipidated: N-palmitoyl cysteine. A lipid anchor (S-diacylglycerol cysteine) is attached at Cys23.

The protein belongs to the staphylococcal tandem lipoprotein family.

It localises to the cell membrane. This is an uncharacterized protein from Staphylococcus aureus (strain NCTC 8325 / PS 47).